Reading from the N-terminus, the 149-residue chain is D-aminoacyl-tRNA deacylase (149 aa).

The Gly-cisPro motif, important for rejection of L-amino acids signature appears at 137–138 (GP).

This sequence belongs to the DTD family. In terms of assembly, homodimer.

The protein localises to the cytoplasm. The catalysed reaction is glycyl-tRNA(Ala) + H2O = tRNA(Ala) + glycine + H(+). The enzyme catalyses a D-aminoacyl-tRNA + H2O = a tRNA + a D-alpha-amino acid + H(+). An aminoacyl-tRNA editing enzyme that deacylates mischarged D-aminoacyl-tRNAs. Also deacylates mischarged glycyl-tRNA(Ala), protecting cells against glycine mischarging by AlaRS. Acts via tRNA-based rather than protein-based catalysis; rejects L-amino acids rather than detecting D-amino acids in the active site. By recycling D-aminoacyl-tRNA to D-amino acids and free tRNA molecules, this enzyme counteracts the toxicity associated with the formation of D-aminoacyl-tRNA entities in vivo and helps enforce protein L-homochirality. The protein is D-aminoacyl-tRNA deacylase of Clostridium botulinum (strain Eklund 17B / Type B).